The sequence spans 82 residues: RNA-binding protein BPUM_0095 (82 aa).

The protein belongs to the eukaryotic ribosomal protein eL8 family.

In Bacillus pumilus (strain SAFR-032), this protein is RNA-binding protein BPUM_0095.